Reading from the N-terminus, the 145-residue chain is MLTRLVLSAHLSSTTSPPWTHAAISWELDNVLMPSPRIWPQVTPTGRSASVRSEGNTSSLWNFSAGQDVHAIVTRTCESVLSSAVYTHGCGCVRSATNITCQSSGQQRQAARQEEENSICKAHDSREGRLGYPLSAHQPGSGGPN.

An N-terminal signal peptide occupies residues 1-22 (MLTRLVLSAHLSSTTSPPWTHA). N-linked (GlcNAc...) asparagine glycosylation is present at Asn98. Residues 103-145 (SSGQQRQAARQEEENSICKAHDSREGRLGYPLSAHQPGSGGPN) form a disordered region.

The protein resides in the secreted. This is an uncharacterized protein from Homo sapiens (Human).